Consider the following 414-residue polypeptide: Serine hydroxymethyltransferase (414 aa).

(6S)-5,6,7,8-tetrahydrofolate is bound by residues leucine 116 and 120–122; that span reads GHL. Residue lysine 224 is modified to N6-(pyridoxal phosphate)lysine. (6S)-5,6,7,8-tetrahydrofolate-binding positions include glutamate 240 and 348 to 350; that span reads SPF.

It belongs to the SHMT family. Homodimer. It depends on pyridoxal 5'-phosphate as a cofactor.

It localises to the cytoplasm. The catalysed reaction is (6R)-5,10-methylene-5,6,7,8-tetrahydrofolate + glycine + H2O = (6S)-5,6,7,8-tetrahydrofolate + L-serine. It participates in one-carbon metabolism; tetrahydrofolate interconversion. Its pathway is amino-acid biosynthesis; glycine biosynthesis; glycine from L-serine: step 1/1. Its function is as follows. Catalyzes the reversible interconversion of serine and glycine with tetrahydrofolate (THF) serving as the one-carbon carrier. This reaction serves as the major source of one-carbon groups required for the biosynthesis of purines, thymidylate, methionine, and other important biomolecules. Also exhibits THF-independent aldolase activity toward beta-hydroxyamino acids, producing glycine and aldehydes, via a retro-aldol mechanism. This is Serine hydroxymethyltransferase from Campylobacter concisus (strain 13826).